A 290-amino-acid chain; its full sequence is CMRF35-like molecule 1 (290 aa).

Residues 1-19 (MPLLTLYLLLFWLSGYSIV) form the signal peptide. The Ig-like V-type domain maps to 20–126 (TQITGPTTVN…LGVTVQVTID (107 aa)). Over 20 to 156 (TQITGPTTVN…DNRHKLLKLS (137 aa)) the chain is Extracellular. Intrachain disulfides connect C40-C108 and C54-C62. An N-linked (GlcNAc...) asparagine glycan is attached at N88. The helical transmembrane segment at 157–177 (VLLPLIFTILLLLLVAASLLA) threads the bilayer. Over 178–290 (WRMMKYQQKA…PTEYSTISRP (113 aa)) the chain is Cytoplasmic. Positions 267-290 (GHLSSHLPGRGPEEPTEYSTISRP) are disordered.

Belongs to the CD300 family. In terms of assembly, interacts with PTPN6/SHP-1 in a tyrosine phosphorylation dependent manner. Interacts with IL4R. Post-translationally, phosphorylated on tyrosine. In terms of tissue distribution, highly expressed in spleen, peripheral blood leukocyte and monocyte, and lung. Weakly expressed in thymus, heart, brain, placenta, liver, skeletal muscle, kidney, pancreas, prostate, testis, ovary, small intestine or colon. Expressed selectively in monocytes and monocyte-related cells.

The protein localises to the cell membrane. Its function is as follows. Acts as an inhibitory receptor for myeloid cells and mast cells. Positively regulates the phagocytosis of apoptotic cells (efferocytosis) via phosphatidylserine (PS) recognition; recognizes and binds PS as a ligand which is expressed on the surface of apoptotic cells. Plays an important role in the maintenance of immune homeostasis, by promoting macrophage-mediated efferocytosis and by inhibiting dendritic cell-mediated efferocytosis. Negatively regulates Fc epsilon receptor-dependent mast cell activation and allergic responses via binding to ceramide and sphingomyelin which act as ligands. May act as a coreceptor for interleukin 4 (IL-4). Associates with and regulates IL-4 receptor alpha-mediated responses by augmenting IL-4- and IL-13-induced signaling. Negatively regulates the Toll-like receptor (TLR) signaling mediated by MYD88 and TRIF through activation of PTPN6/SHP-1 and PTPN11/SHP-2. Inhibits osteoclast formation. Induces macrophage cell death upon engagement. The chain is CMRF35-like molecule 1 (CD300LF) from Homo sapiens (Human).